A 173-amino-acid polypeptide reads, in one-letter code: Protein MOTHER of FT and TFL1 (173 aa).

An N-acetylalanine modification is found at Ala2.

Belongs to the phosphatidylethanolamine-binding protein family. In terms of tissue distribution, expressed in gametophytes and developing seeds.

It localises to the cytoplasm. In terms of biological role, may form complexes with phosphorylated ligands by interfering with kinases and their effectors. Regulates seed germination via the abscisic acid (ABA) and gibberellic acid (GA)signaling pathways. During seed germination, MFT expression is directly repressed by ABI3 or promoted by ABI5 in the ABA signaling pathway. Involved in a negative feedback regulation of ABA signaling. Promotes embryo growth by direct repression of ABI5. In the GA signaling pathway, MFT expression is promoted by the DELLA protein RGL2 during seed germination. May regulate seed germination and fertility through the brassinosteroid (BR) signaling pathway. This Arabidopsis thaliana (Mouse-ear cress) protein is Protein MOTHER of FT and TFL1 (MFT).